The following is a 918-amino-acid chain: Protein translocase subunit SecA (918 aa).

Residues Q87, G105–T109, and D500 contribute to the ATP site. The tract at residues A876–R918 is disordered. Zn(2+)-binding residues include C902, C904, C913, and H914. A compositionally biased stretch (basic residues) spans K908–R918.

It belongs to the SecA family. In terms of assembly, monomer and homodimer. Part of the essential Sec protein translocation apparatus which comprises SecA, SecYEG and auxiliary proteins SecDF-YajC and YidC. It depends on Zn(2+) as a cofactor.

Its subcellular location is the cell inner membrane. It is found in the cytoplasm. The catalysed reaction is ATP + H2O + cellular proteinSide 1 = ADP + phosphate + cellular proteinSide 2.. Part of the Sec protein translocase complex. Interacts with the SecYEG preprotein conducting channel. Has a central role in coupling the hydrolysis of ATP to the transfer of proteins into and across the cell membrane, serving both as a receptor for the preprotein-SecB complex and as an ATP-driven molecular motor driving the stepwise translocation of polypeptide chains across the membrane. The protein is Protein translocase subunit SecA of Rhodospirillum centenum (strain ATCC 51521 / SW).